Reading from the N-terminus, the 467-residue chain is Argininosuccinate lyase (467 aa).

Belongs to the lyase 1 family. Argininosuccinate lyase subfamily.

It is found in the cytoplasm. It catalyses the reaction 2-(N(omega)-L-arginino)succinate = fumarate + L-arginine. The protein operates within amino-acid biosynthesis; L-arginine biosynthesis; L-arginine from L-ornithine and carbamoyl phosphate: step 3/3. The sequence is that of Argininosuccinate lyase from Sinorhizobium fredii (strain NBRC 101917 / NGR234).